Reading from the N-terminus, the 456-residue chain is Taurine--pyruvate aminotransferase (456 aa).

The residue at position 280 (lysine 280) is an N6-(pyridoxal phosphate)lysine.

The protein belongs to the class-III pyridoxal-phosphate-dependent aminotransferase family. In terms of assembly, homotetramer. Pyridoxal 5'-phosphate is required as a cofactor.

The catalysed reaction is taurine + pyruvate = sulfoacetaldehyde + L-alanine. It participates in organosulfur degradation; alkanesulfonate degradation. Involved in an anaerobic respiration pathway that converts the sulfonate taurine (2-aminoethanesulfonate) to ammonia, acetate and sulfide. Catalyzes the initial metabolic reaction of anaerobic taurine degradation, i.e. the transamination reaction between taurine and pyruvate leading to sulfoacetaldehyde and alanine. This Bilophila wadsworthia (strain 3_1_6) protein is Taurine--pyruvate aminotransferase.